A 156-amino-acid polypeptide reads, in one-letter code: Cellulose synthase operon protein D (156 aa).

It participates in glycan metabolism; bacterial cellulose biosynthesis. Its function is as follows. May have a major role in the perfection of crystallization, involved either in the pore structure itself or in the organization of the pores within the linear array of terminal synthesizing complexes (TCs). The protein is Cellulose synthase operon protein D of Komagataeibacter sucrofermentans (strain ATCC 700178 / DSM 15973 / CECT 7291 / JCM 9730 / LMG 18788 / BPR 2001) (Acetobacter xylinus subsp. sucrofermentans).